The sequence spans 118 residues: Succinate dehydrogenase assembly factor 1, mitochondrial (118 aa).

The short motif at 14–16 (LYR) is the LYR motif 1; required for interaction with HSC20 element. Residues 53–55 (LYR) carry the LYR motif 2; not required for interaction with HSC20 motif. The segment at 53 to 65 (LYRRGRRQLQLLR) is interaction with SDHB. Residues 68–118 (HATAMGTFVRPRGPAEEPGDATAPGTRLDDGGAPKNSCEDTGARETRSDGR) form a disordered region. Positions 94 to 118 (RLDDGGAPKNSCEDTGARETRSDGR) are enriched in basic and acidic residues.

Belongs to the complex I LYR family. SDHAF1 subfamily. As to quaternary structure, interacts with SDHB within an SDHA-SDHB subcomplex. Also interacts with the iron-sulfur transfer complex formed by HSC20, HSPA9 and ISCU through direct binding to HSC20. Binding of SDHAF1 to SDHB precedes and is necessary for recruitment of the iron-sulfur transfer complex by SDHAF1.

The protein localises to the mitochondrion matrix. Functionally, plays an essential role in the assembly of succinate dehydrogenase (SDH), an enzyme complex (also referred to as respiratory complex II) that is a component of both the tricarboxylic acid (TCA) cycle and the mitochondrial electron transport chain, and which couples the oxidation of succinate to fumarate with the reduction of ubiquinone (coenzyme Q) to ubiquinol. Promotes maturation of the iron-sulfur protein subunit Sdhb of the SDH catalytic dimer, protecting it from the deleterious effects of oxidants. May act together with SDHAF3. Contributes to iron-sulfur cluster incorporation into SDHB by binding to SDHB and recruiting the iron-sulfur transfer complex formed by HSC20, HSPA9 and ISCU through direct binding to HSC20. The chain is Succinate dehydrogenase assembly factor 1, mitochondrial from Mus musculus (Mouse).